A 357-amino-acid chain; its full sequence is Acyl-coenzyme A diphosphatase NUDT19 (357 aa).

A Nudix hydrolase domain is found at 10 to 242; it reads AATVMLAAGW…IWLAPPQFYE (233 aa). The Nudix box motif lies at 97–118; that stretch reads AALPDDVALRICAIRETFEEAG. Positions 112 and 116 each coordinate Mg(2+). K300 is modified (N6-succinyllysine). The Microbody targeting signal signature appears at 355–357; that stretch reads ARL.

Belongs to the Nudix hydrolase family. In terms of assembly, monomer. Requires Mg(2+) as cofactor. Mn(2+) is required as a cofactor.

The protein resides in the peroxisome. The catalysed reaction is an acyl-CoA + H2O = an acyl-4'-phosphopantetheine + adenosine 3',5'-bisphosphate + 2 H(+). The enzyme catalyses CoA + H2O = (R)-4'-phosphopantetheine + adenosine 3',5'-bisphosphate + 2 H(+). It catalyses the reaction hexanoyl-CoA + H2O = hexanoyl-4'-phosphopantetheine + adenosine 3',5'-bisphosphate + 2 H(+). It carries out the reaction octanoyl-CoA + H2O = S-octanoyl-4'-phosphopantetheine + adenosine 3',5'-bisphosphate + 2 H(+). The catalysed reaction is butanoyl-CoA + H2O = S-butanoyl-4'-phosphopantetheine + adenosine 3',5'-bisphosphate + 2 H(+). The enzyme catalyses propanoyl-CoA + H2O = propanoyl-4'-phosphopantetheine + adenosine 3',5'-bisphosphate + 2 H(+). It catalyses the reaction malonyl-CoA + H2O = malonyl-4'-phosphopantetheine + adenosine 3',5'-bisphosphate + 2 H(+). It carries out the reaction succinyl-CoA + H2O = succinyl-4'-phosphopantetheine + adenosine 3',5'-bisphosphate + 2 H(+). The catalysed reaction is choloyl-CoA + H2O = S-choloyl-4'-phosphopantetheine + adenosine 3',5'-bisphosphate + 2 H(+). The enzyme catalyses 4,8-dimethylnonanoyl-CoA + H2O = S-(4,8-dimethylnonanoyl)-4'-phosphopantetheine + adenosine 3',5'-bisphosphate + 2 H(+). It catalyses the reaction (9Z,12Z,15Z)-octadecatrienoyl-CoA + H2O = S-(9Z,12Z,15Z-octadecatrienoyl)-4'-phosphopantetheine + adenosine 3',5'-bisphosphate + 2 H(+). It carries out the reaction (9Z,12Z)-octadecadienoyl-CoA + H2O = S-(9Z,12Z-octadecadienoyl)-4'-phosphopantetheine + adenosine 3',5'-bisphosphate + 2 H(+). The catalysed reaction is (9Z)-hexadecenoyl-CoA + H2O = S-(9Z-hexadecenoyl)-4'-phosphopantetheine + adenosine 3',5'-bisphosphate + 2 H(+). The enzyme catalyses (9Z)-tetradecenoyl-CoA + H2O = S-(9Z-tetradecenoyl)-4'-phosphopantetheine + adenosine 3',5'-bisphosphate + 2 H(+). It catalyses the reaction (6Z)-octenoyl-CoA + H2O = S-(6Z-octenoyl)-4'-phosphopantetheine + adenosine 3',5'-bisphosphate + 2 H(+). It carries out the reaction hexadecanoyl-CoA + H2O = S-hexadecanoyl-4'-phosphopantetheine + adenosine 3',5'-bisphosphate + 2 H(+). The catalysed reaction is tetradecanoyl-CoA + H2O = tetradecanoyl-4'-phosphopantetheine + adenosine 3',5'-bisphosphate + 2 H(+). The enzyme catalyses dodecanoyl-CoA + H2O = S-dodecanoyl-4'-phosphopantetheine + adenosine 3',5'-bisphosphate + 2 H(+). It catalyses the reaction a 5'-end CoA-ribonucleoside in mRNA + H2O = a 5'-end phospho-adenosine-phospho-ribonucleoside in mRNA + (R)-4'-phosphopantetheine + 2 H(+). In terms of biological role, fatty acyl-coenzyme A (CoA) diphosphatase that hydrolyzes fatty acyl-CoA to yield acyl-4'-phosphopantetheine and adenosine 3',5'-bisphosphate. Mediates the hydrolysis of a wide range of CoA esters, including choloyl-CoA and branched-chain fatty-acyl-CoA esters and at low substrate concentrations medium and long-chain fatty-acyl-CoA esters are the primary substrates. Highest activity seen with medium-chain acyl-CoA esters and higher rates of activity seen with the unsaturated acyl-CoA esters compared with the saturated esters. Exhibits decapping activity towards dpCoA-capped RNAs in vitro. In Rattus norvegicus (Rat), this protein is Acyl-coenzyme A diphosphatase NUDT19 (Nudt19).